We begin with the raw amino-acid sequence, 468 residues long: Probable xyloglucan galactosyltransferase GT13 (468 aa).

Residues 1-18 are Cytoplasmic-facing; the sequence is MDKFNPKKEKTVKKRALK. The helical; Signal-anchor for type II membrane protein transmembrane segment at 19–35 threads the bilayer; it reads VLTEISPTPLFSMLFLL. At 36-468 the chain is on the lumenal side; that stretch reads HISQIATYLS…RVSLFKMTRI (433 aa). Asn53, Asn116, Asn153, Asn240, and Asn412 each carry an N-linked (GlcNAc...) asparagine glycan.

This sequence belongs to the glycosyltransferase 47 family. Expressed in roots, hypocotyls, cotyledons, leaves, stems, petals and carpels.

It localises to the golgi apparatus membrane. Functionally, functions in xyloglucan synthesis by adding side chains to the xylosylated glucan backbone. Involved in the galactosylation of hemicellulose xyloglucan. This is Probable xyloglucan galactosyltransferase GT13 from Arabidopsis thaliana (Mouse-ear cress).